We begin with the raw amino-acid sequence, 260 residues long: Ribosomal RNA small subunit methyltransferase J (260 aa).

Residues 125 to 126 (ER) and D179 contribute to the S-adenosyl-L-methionine site.

This sequence belongs to the methyltransferase superfamily. RsmJ family.

The protein resides in the cytoplasm. It catalyses the reaction guanosine(1516) in 16S rRNA + S-adenosyl-L-methionine = N(2)-methylguanosine(1516) in 16S rRNA + S-adenosyl-L-homocysteine + H(+). Specifically methylates the guanosine in position 1516 of 16S rRNA. This chain is Ribosomal RNA small subunit methyltransferase J, found in Pseudomonas fluorescens (strain ATCC BAA-477 / NRRL B-23932 / Pf-5).